The primary structure comprises 901 residues: Nuclear factor of activated T-cells, cytoplasmic 4 (901 aa).

Residues 1–11 (MGAASCEDEEL) are compositionally biased toward acidic residues. Disordered stretches follow at residues 1–180 (MGAA…SSWS) and 203–361 (NEAA…TEDS). Residues 61–81 (IPRPPPPRPGMHSPPPRPAPS) are compositionally biased toward pro residues. The segment covering 96–109 (GGPGGTAGGTGGGR) has biased composition (gly residues). Positions 114–119 (PSIRIT) are calcineurin-binding. The segment covering 114-123 (PSIRITSISP) has biased composition (low complexity). A compositionally biased stretch (gly residues) spans 151 to 165 (GFGGYREAGGQGGGA). The span at 166 to 180 (FFSPSPGSSSLSSWS) shows a compositional bias: low complexity. A phosphoserine mark is found at Ser-168, Ser-170, Ser-213, and Ser-217. The stretch at 213 to 229 (SPLPSPRASPRPWTPED) is one SP 1 repeat. The tract at residues 213-293 (SPLPSPRASP…LSRRGSLGEE (81 aa)) is 2 approximate SP repeats. Composition is skewed to pro residues over residues 215-227 (LPSP…PWTP) and 254-263 (GPIPASPRPA). Positions 268–270 (KRR) match the Nuclear localization signal motif. Low complexity predominate over residues 272–288 (SSSGTPSSASPALSRRG). An SP 2; approximate repeat occupies 277 to 293 (PSSASPALSRRGSLGEE). 3 positions are modified to phosphoserine: Ser-289, Ser-334, and Ser-344. The region spanning 401–582 (SALPPLDWPL…VPIECSQRSA (182 aa)) is the RHD domain. A DNA-binding region spans residues 430 to 437 (RAHYETEG). Residues 586 to 683 (PQVEAYSPSA…KRSPTQSFKF (98 aa)) form the IPT/TIG domain. The Nuclear localization signal motif lies at 672 to 674 (RRK). Residue Lys-689 forms a Glycyl lysine isopeptide (Lys-Gly) (interchain with G-Cter in SUMO2) linkage. Disordered regions lie at residues 697-721 (SLRG…PRPP) and 791-868 (QYGG…GFRD). Residues 805 to 822 (FSPPAPFRPPLPSSPPLE) are compositionally biased toward pro residues.

In terms of assembly, member of the multicomponent NFATC transcription complex that consists of at least two components, a pre-existing cytoplasmic component NFATC2 and an inducible nuclear component NFATC1. Other NFAT proteins, such as NFATC4, NFATC3, or members of the activating protein-1 (AP-1) family and MAF can also bind the complex. NFAT proteins can bind DNA as monomers or dimers. Component of a promoter-binding complex composed of STAT3, NFATC3 and NFATC4; complex formation is enhanced by calcineurin. Interacts with CREBBP; this interaction potentiates transcription activation. Interacts with MAPK8/JNK1 and MAPK9/JNK2. Interacts with GATA4 (via the second Zn finger). Interacts (via N-terminus) with IRAK1 (via C-terminus). Interacts with RPS6KA3. Interacts with HOMER1, HOMER2 and HOMER3; this interaction competes with calcineurin/PPP3CA-binding and hence prevents NFATC4 dephosphorylation and activation. Interacts with ESR1 and ESR2; this interaction decreases NFATC4 transcriptional activity. Interacts with MTOR and MAPK7/ERK5. Interacts with TRIM17; this interaction prevents NFATC3 nuclear localization. Interacts with TCF25 (via C-terminus); the interaction leads to suppression of NFATC4 transcription factor activity and is reduced following stimulation with angiotensin-2. Post-translationally, phosphorylated by NFATC-kinases; dephosphorylated by calcineurin/PPP3CA. Phosphorylated on Ser-168 and Ser-170 by MTOR, IRAK1, MAPK7/ERK5 and MAPK14/p38, on Ser-213 and Ser-217 by MAPK8 and MAPK9, and on Ser-289 and Ser-344 by RPS6KA3. Phosphorylated by GSK3B; this phosphorylation markedly increases NFATC4 ubiquitination. Phosphorylation by MAPK8/JNK1, MAPK9/JNK2 and RPS6KA3 may stimulate NFATC4 transcriptional activity. Phosphorylation at Ser-168 and Ser-170 is stimulated by UV irradiation. Ubiquitinated, leading to degradation by the proteasome. Ubiquitination may be stimulated by GSK3B-dependent phosphorylation. Polyubiquitin linkage mainly occurs through 'Lys-48'. Expressed in heart (at protein level).

Its subcellular location is the cytoplasm. It is found in the nucleus. In terms of biological role, ca(2+)-regulated transcription factor that is involved in several processes, including the development and function of the immune, cardiovascular, musculoskeletal, and nervous systems. Involved in T-cell activation, stimulating the transcription of cytokine genes, including that of IL2 and IL4. Along with NFATC3, involved in embryonic heart development. Following JAK/STAT signaling activation and as part of a complex with NFATC3 and STAT3, binds to the alpha-beta E4 promoter region of CRYAB and activates transcription in cardiomyocytes. Involved in mitochondrial energy metabolism required for cardiac morphogenesis and function. Transactivates many genes involved in heart physiology. Along with GATA4, binds to and activates NPPB/BNP promoter. Activates NPPA/ANP/ANF and MYH7/beta-MHC transcription. Binds to and transactivates AGTR2 gene promoter. Involved in the regulation of adult hippocampal neurogenesis. Involved in BDNF-driven pro-survival signaling in hippocampal adult-born neurons. Involved in the formation of long-term spatial memory and long-term potentiation. In cochlear nucleus neurons, may play a role in deafferentation-induced apoptosis during a developmental critical period when auditory neurons depend on afferent input for survival. Binds to and activates the BACE1/Beta-secretase 1 promoter, hence may regulate the proteolytic processing of the amyloid precursor protein (APP). Plays a role in adipocyte differentiation. May be involved in myoblast differentiation into myotubes. Binds the consensus DNA sequence 5'-GGAAAAT-3'. In the presence of CREBBP, activates TNF transcription. Binds to PPARG gene promoter and regulates its activity. Binds to PPARG and REG3G gene promoters. This Rattus norvegicus (Rat) protein is Nuclear factor of activated T-cells, cytoplasmic 4 (Nfatc4).